The primary structure comprises 220 residues: Ribosomal RNA large subunit methyltransferase E (220 aa).

S-adenosyl-L-methionine-binding residues include glycine 64, tryptophan 66, aspartate 92, aspartate 108, and aspartate 133. The active-site Proton acceptor is lysine 173.

It belongs to the class I-like SAM-binding methyltransferase superfamily. RNA methyltransferase RlmE family.

It localises to the cytoplasm. It carries out the reaction uridine(2552) in 23S rRNA + S-adenosyl-L-methionine = 2'-O-methyluridine(2552) in 23S rRNA + S-adenosyl-L-homocysteine + H(+). Specifically methylates the uridine in position 2552 of 23S rRNA at the 2'-O position of the ribose in the fully assembled 50S ribosomal subunit. This chain is Ribosomal RNA large subunit methyltransferase E, found in Acidovorax sp. (strain JS42).